A 294-amino-acid polypeptide reads, in one-letter code: MYB-like transcription factor ODO1 (294 aa).

HTH myb-type domains lie at 9–61 and 62–116; these read KLGV…TNYL and RPDL…KKKL. 2 consecutive DNA-binding regions (H-T-H motif) follow at residues 37-61 and 89-112; these read WRAV…TNYL and WSKI…NTHI. Disordered regions lie at residues 128–152 and 171–191; these read PLKK…NGHQ and TEFD…NSSC.

Restricted to the petals, with the highest expression in the limb, probably in both epidermal and mesophyll cell layers.

It localises to the nucleus. Functionally, R2R3 MYB-type transcription factor controlling the production of volatile organic compounds (VOCs), including floral volatile benzenoids and phenylpropanoids (FVBP), in flowers of fragrant cultivars (e.g. cv. Mitchell and cv. V26) by regulating the shikimate pathway, via the activation of several genes (e.g. EPSPS, ADT1, PAL1, CFAT and CCoAOMT1). This scent, mostly produced in the evening and night by the petals, attracts the pollinators (e.g. the night-active hawkmoth pollinator Manduca sexta). Promotes the expression of ABCG1 in petals three hours before the onset of volatile scent emission. Anthocyanins production is not controlled by ODO1 as color and scent are produced at different stages of development. Seems to trigger a negative feed-back loop that represses the expression of EOBI. This is MYB-like transcription factor ODO1 from Petunia hybrida (Petunia).